Reading from the N-terminus, the 141-residue chain is Lutropin subunit beta (141 aa).

A signal peptide spans 1-22 (MERYQELTVLLLLLLLEGGSWG). 6 disulfides stabilise this stretch: cysteine 30–cysteine 78, cysteine 44–cysteine 93, cysteine 47–cysteine 131, cysteine 55–cysteine 109, cysteine 59–cysteine 111, and cysteine 114–cysteine 121. N-linked (GlcNAc...) asparagine glycosylation is present at asparagine 34.

Belongs to the glycoprotein hormones subunit beta family. In terms of assembly, heterodimer of a common alpha chain and a unique beta chain which confers biological specificity to thyrotropin, lutropin, follitropin and gonadotropin.

The protein resides in the secreted. In terms of biological role, promotes spermatogenesis and ovulation by stimulating the testes and ovaries to synthesize steroids. The polypeptide is Lutropin subunit beta (LHB) (Trichosurus vulpecula (Brush-tailed possum)).